We begin with the raw amino-acid sequence, 162 residues long: Phosphopantetheine adenylyltransferase (162 aa).

A substrate-binding site is contributed by Ser-9. ATP contacts are provided by residues 9-10 (SF) and His-17. Residues Lys-41, Thr-73, and Arg-87 each coordinate substrate. Residues 88-90 (GLR), Glu-98, and 122-128 (NQNISSS) each bind ATP.

It belongs to the bacterial CoaD family. As to quaternary structure, homohexamer. Mg(2+) serves as cofactor.

It localises to the cytoplasm. It catalyses the reaction (R)-4'-phosphopantetheine + ATP + H(+) = 3'-dephospho-CoA + diphosphate. The protein operates within cofactor biosynthesis; coenzyme A biosynthesis; CoA from (R)-pantothenate: step 4/5. Its function is as follows. Reversibly transfers an adenylyl group from ATP to 4'-phosphopantetheine, yielding dephospho-CoA (dPCoA) and pyrophosphate. This chain is Phosphopantetheine adenylyltransferase, found in Leuconostoc mesenteroides subsp. mesenteroides (strain ATCC 8293 / DSM 20343 / BCRC 11652 / CCM 1803 / JCM 6124 / NCDO 523 / NBRC 100496 / NCIMB 8023 / NCTC 12954 / NRRL B-1118 / 37Y).